The primary structure comprises 4306 residues: Cytoplasmic dynein 2 heavy chain 1 (4306 aa).

The segment at 1 to 1650 is stem; that stretch reads MAGSLSDVRK…YVQMVDSELQ (1650 aa). 145–152 serves as a coordination point for ATP; sequence LGVVLRKS. Residues 669 to 696 are a coiled coil; it reads KELEGYIQKLQNAAERLATENRRLRKWH. AAA regions lie at residues 1651–1875, 1941–2161, 2249–2505, and 2617–2862; these read YTYE…VLRG, SALK…KQND, LTAD…WVLG, and HYGR…ESCK. Residues 1689 to 1696, 1979 to 1986, 2291 to 2298, and 2655 to 2662 contribute to the ATP site; these read GPAGTGKT, GPSGAGKS, GPEGCGKG, and GRSGVGRR. Residues 2880 to 3168 are stalk; the sequence is AISSSKRKEL…AEVSKAQETI (289 aa). Coiled-coil stretches lie at residues 2896–2981, 3108–3199, and 3407–3441; these read LQAG…KEVQ, LETE…LATL, and IQHE…SLLE. AAA stretches follow at residues 3243 to 3472 and 3689 to 3904; these read LCTE…LIQD and MALF…VIDR.

This sequence belongs to the dynein heavy chain family. In terms of assembly, the cytoplasmic dynein complex 2 is probably composed by a heavy chain DYNC2H1 homodimer and a number of DYNC2LI1 light intermediate chains. In terms of tissue distribution, widely expressed both in ciliated and unciliated tissues. Detected in brain and testis (at protein level).

The protein localises to the cytoplasm. The protein resides in the cytoskeleton. It is found in the cilium axoneme. Its subcellular location is the cell membrane. Functionally, may function as a motor for intraflagellar retrograde transport. Functions in cilia biogenesis. May play a role in transport between endoplasmic reticulum and Golgi or organization of the Golgi in cells. In Rattus norvegicus (Rat), this protein is Cytoplasmic dynein 2 heavy chain 1 (Dync2h1).